We begin with the raw amino-acid sequence, 84 residues long: Small ribosomal subunit protein bS20 (84 aa).

Belongs to the bacterial ribosomal protein bS20 family.

Its function is as follows. Binds directly to 16S ribosomal RNA. This chain is Small ribosomal subunit protein bS20, found in Lacticaseibacillus casei (strain BL23) (Lactobacillus casei).